The following is a 256-amino-acid chain: MGRGRVQLKRIENKINRQVTFSKRRAGLFKKAHEISVLCDAEVALVVFSHKGKLFEYSTDSCMEKILERYERYSYAERQLIAPESDVNTNWSMEYNRLKAKIELLERNQRHYLGEDLQAMSPKELQNLEQQLDTALKHIRSRKNQLMYDSVNELQRKEKAIQEQNSMLSKQIKEREKVLMAQQEQWDQQNHGQNMPSPPPPQQHQIQHPYMLSHQPSPFLNMGGLYQEEDPMAMRRNDLDLSLEPVYNCNLGCFAA.

The MADS-box domain occupies 1–61 (MGRGRVQLKR…GKLFEYSTDS (61 aa)). The K-box domain maps to 88 to 178 (NTNWSMEYNR…SKQIKEREKV (91 aa)).

As to quaternary structure, homodimer capable of binding to CArG-box sequences. Expressed in some of the meristems of arrest-stage broccoli heads.

The protein resides in the nucleus. In terms of biological role, transcription factor that promotes early floral meristem identity in synergy with LEAFY. Displays a redundant function with CAULIFLOWER in the up-regulation of LEAFY. Required subsequently for the transition of an inflorescence meristem into a floral meristem, and for the normal development of sepals and petals in flowers. Regulates positively B class homeotic proteins. The protein is Floral homeotic protein APETALA 1-1 (1AP1) of Brassica oleracea var. italica (Broccoli).